Reading from the N-terminus, the 332-residue chain is Glycerol-3-phosphate dehydrogenase [NAD(P)+] (332 aa).

NADPH-binding residues include Trp13, Lys34, and Lys108. Sn-glycerol 3-phosphate is bound by residues Lys108, Gly136, and Ser138. Residue Ala140 participates in NADPH binding. The sn-glycerol 3-phosphate site is built by Lys191, Asp244, Ser254, Arg255, and Asn256. Lys191 functions as the Proton acceptor in the catalytic mechanism. Arg255 provides a ligand contact to NADPH. 2 residues coordinate NADPH: Val279 and Glu281.

Belongs to the NAD-dependent glycerol-3-phosphate dehydrogenase family.

The protein localises to the cytoplasm. It catalyses the reaction sn-glycerol 3-phosphate + NAD(+) = dihydroxyacetone phosphate + NADH + H(+). It carries out the reaction sn-glycerol 3-phosphate + NADP(+) = dihydroxyacetone phosphate + NADPH + H(+). It functions in the pathway membrane lipid metabolism; glycerophospholipid metabolism. Functionally, catalyzes the reduction of the glycolytic intermediate dihydroxyacetone phosphate (DHAP) to sn-glycerol 3-phosphate (G3P), the key precursor for phospholipid synthesis. This chain is Glycerol-3-phosphate dehydrogenase [NAD(P)+], found in Francisella tularensis subsp. holarctica (strain FTNF002-00 / FTA).